Reading from the N-terminus, the 324-residue chain is Transcription factor MYB74 (324 aa).

HTH myb-type domains follow at residues 10–62 (KNGL…TNYL) and 63–117 (RPDI…RKRL). 2 consecutive DNA-binding regions (H-T-H motif) follow at residues 38 to 62 (WRTLPKNAGLQRCGKSCRLRWTNYL) and 90 to 113 (WSAIAARLPGRTDNEIKNYWNTHI).

Highly expressed in flowers and at lower levels in rosette leaves and cauline leaves. Expressed at low levels in roots, stems and siliques.

It localises to the nucleus. In terms of biological role, probable transcription factor that may function in salt stress response. This is Transcription factor MYB74 from Arabidopsis thaliana (Mouse-ear cress).